The primary structure comprises 107 residues: Period circadian protein (107 aa).

Residues 81 to 107 form a disordered region; the sequence is ITNGSNTGTGTSSGSFQPPLLTEALLN. The segment covering 82–95 has biased composition (low complexity); that stretch reads TNGSNTGTGTSSGS.

Forms a heterodimer with timeless (TIM); the complex then translocates into the nucleus. Phosphorylated with a circadian rhythmicity, probably by the double-time protein (dbt). Phosphorylation could be implicated in the stability of per monomer and in the formation of heterodimer per-tim.

It is found in the nucleus. The protein resides in the cytoplasm. The protein localises to the perinuclear region. Its function is as follows. Essential for biological clock functions. Determines the period length of circadian and ultradian rhythms; an increase in PER dosage leads to shortened circadian rhythms and a decrease leads to lengthened circadian rhythms. Essential for the circadian rhythmicity of locomotor activity, eclosion behavior, and for the rhythmic component of the male courtship song that originates in the thoracic nervous system. The biological cycle depends on the rhythmic formation and nuclear localization of the TIM-PER complex. Light induces the degradation of TIM, which promotes elimination of PER. Nuclear activity of the heterodimer coordinatively regulates PER and TIM transcription through a negative feedback loop. Behaves as a negative element in circadian transcriptional loop. Does not appear to bind DNA, suggesting indirect transcriptional inhibition. The sequence is that of Period circadian protein (per) from Beris vallata (Common orange legionnaire).